An 861-amino-acid chain; its full sequence is Bifunctional uridylyltransferase/uridylyl-removing enzyme (861 aa).

The interval 1–322 (MHTAAAATPA…FPTELGITRT (322 aa)) is uridylyltransferase. Residues 323–679 (INGRFVERQG…ARISPVGEGL (357 aa)) form a uridylyl-removing region. The HD domain occupies 441–557 (VDQHILMVVR…RHFADQVGSE (117 aa)). ACT domains are found at residues 680–763 (QVAV…AEPP) and 792–861 (LLSL…ALAI).

The protein belongs to the GlnD family. Mg(2+) serves as cofactor.

The catalysed reaction is [protein-PII]-L-tyrosine + UTP = [protein-PII]-uridylyl-L-tyrosine + diphosphate. It carries out the reaction [protein-PII]-uridylyl-L-tyrosine + H2O = [protein-PII]-L-tyrosine + UMP + H(+). With respect to regulation, uridylyltransferase (UTase) activity is inhibited by glutamine, while glutamine activates uridylyl-removing (UR) activity. Its function is as follows. Modifies, by uridylylation and deuridylylation, the PII regulatory proteins (GlnB and homologs), in response to the nitrogen status of the cell that GlnD senses through the glutamine level. Under low glutamine levels, catalyzes the conversion of the PII proteins and UTP to PII-UMP and PPi, while under higher glutamine levels, GlnD hydrolyzes PII-UMP to PII and UMP (deuridylylation). Thus, controls uridylylation state and activity of the PII proteins, and plays an important role in the regulation of nitrogen assimilation and metabolism. In Ralstonia nicotianae (strain ATCC BAA-1114 / GMI1000) (Ralstonia solanacearum), this protein is Bifunctional uridylyltransferase/uridylyl-removing enzyme.